The sequence spans 197 residues: MPRAPRTYSKTYSTPKRPYESSRLDAELKLAGEFGLKNKKEIYRISFQLSKIRRAARDLLTRDEKDPKRLFEGNALIRRLVRVGVLSEDKKKLDYVLALKVEDFLERRLQTQVYKLGLAKSVHHARVLITQRHIAVGKQIVNIPSFMVRLDSEKHIDFAPTSPFGGARPGRVARRNAARKAEASGEAADEADEADEE.

The S4 RNA-binding domain maps to 107–181; it reads RRLQTQVYKL…VARRNAARKA (75 aa). Residues 160–197 are disordered; that stretch reads PTSPFGGARPGRVARRNAARKAEASGEAADEADEADEE. Lys-180 is covalently cross-linked (Glycyl lysine isopeptide (Lys-Gly) (interchain with G-Cter in ubiquitin)). Position 184 is a phosphoserine (Ser-184). Positions 187-197 are enriched in acidic residues; sequence AADEADEADEE.

The protein belongs to the universal ribosomal protein uS4 family. Component of the small ribosomal subunit (SSU). Mature yeast ribosomes consist of a small (40S) and a large (60S) subunit. The 40S small subunit contains 1 molecule of ribosomal RNA (18S rRNA) and 33 different proteins (encoded by 57 genes). The large 60S subunit contains 3 rRNA molecules (25S, 5.8S and 5S rRNA) and 46 different proteins (encoded by 81 genes). Interacts with snoRNA U3. uS11 interacts with MPP10. Component of the ribosomal small subunit (SSU) processome composed of at least 40 protein subunits and snoRNA U3.

The protein resides in the cytoplasm. The protein localises to the nucleus. It is found in the nucleolus. Its function is as follows. Component of the ribosome, a large ribonucleoprotein complex responsible for the synthesis of proteins in the cell. The small ribosomal subunit (SSU) binds messenger RNAs (mRNAs) and translates the encoded message by selecting cognate aminoacyl-transfer RNA (tRNA) molecules. The large subunit (LSU) contains the ribosomal catalytic site termed the peptidyl transferase center (PTC), which catalyzes the formation of peptide bonds, thereby polymerizing the amino acids delivered by tRNAs into a polypeptide chain. The nascent polypeptides leave the ribosome through a tunnel in the LSU and interact with protein factors that function in enzymatic processing, targeting, and the membrane insertion of nascent chains at the exit of the ribosomal tunnel. uS4 is involved in nucleolar processing of pre-18S ribosomal RNA and ribosome assembly. The sequence is that of Small ribosomal subunit protein uS4A from Saccharomyces cerevisiae (strain ATCC 204508 / S288c) (Baker's yeast).